Consider the following 792-residue polypeptide: Endonuclease MutS2 (792 aa).

334–341 (GPNTGGKT) lines the ATP pocket. The Smr domain maps to 717-792 (INLIGKTTDE…DAGVTIATFK (76 aa)).

Belongs to the DNA mismatch repair MutS family. MutS2 subfamily. Homodimer. Binds to stalled ribosomes, contacting rRNA.

Functionally, endonuclease that is involved in the suppression of homologous recombination and thus may have a key role in the control of bacterial genetic diversity. Its function is as follows. Acts as a ribosome collision sensor, splitting the ribosome into its 2 subunits. Detects stalled/collided 70S ribosomes which it binds and splits by an ATP-hydrolysis driven conformational change. Acts upstream of the ribosome quality control system (RQC), a ribosome-associated complex that mediates the extraction of incompletely synthesized nascent chains from stalled ribosomes and their subsequent degradation. Probably generates substrates for RQC. This is Endonuclease MutS2 from Agathobacter rectalis (strain ATCC 33656 / DSM 3377 / JCM 17463 / KCTC 5835 / VPI 0990) (Eubacterium rectale).